Reading from the N-terminus, the 409-residue chain is Nucleoprotein (409 aa).

Disordered regions lie at residues 1–64 and 167–197; these read MSAG…SNVK and RNSS…VDDD. The segment at 30-161 is RNA-binding; it reads GTGQASWFQS…NNYRWDFIAL (132 aa). The region spanning 32–157 is the CoV N NTD domain; the sequence is GQASWFQSLK…GGPDNNYRWD (126 aa). The segment covering 176–197 has biased composition (basic and acidic residues); that stretch reads ENSRPGSRDSSRGRQRSRVDDD. Residue Ser192 is modified to Phosphoserine; by host. In terms of domain architecture, CoV N CTD spans 217–333; it reads SKQKANEMAE…ECVDGVGTRP (117 aa). The interval 228–335 is dimerization; sequence KYHKRAIAPG…VDGVGTRPKD (108 aa). Residues Cys322 and Cys325 are joined by a disulfide bond. The tract at residues 327 to 409 is disordered; it reads DGVGTRPKDD…GEGAFDDINI (83 aa). Residues 332-349 are compositionally biased toward basic and acidic residues; the sequence is RPKDDPTPRSRAASKDRN. The residue at position 374 (Thr374) is a Phosphothreonine; by host.

Belongs to the gammacoronavirus nucleocapsid protein family. As to quaternary structure, homooligomer. Both monomeric and oligomeric forms interact with RNA. Interacts with protein M. Interacts with NSP3; this interaction serves to tether the genome to the newly translated replicase-transcriptase complex at a very early stage of infection. In terms of processing, ADP-ribosylated. The ADP-ribosylation is retained in the virion during infection. Post-translationally, phosphorylated on serine and threonine residues.

Its subcellular location is the virion. It localises to the host endoplasmic reticulum-Golgi intermediate compartment. The protein resides in the host Golgi apparatus. In terms of biological role, packages the positive strand viral genome RNA into a helical ribonucleocapsid (RNP) and plays a fundamental role during virion assembly through its interactions with the viral genome and membrane protein M. Plays an important role in enhancing the efficiency of subgenomic viral RNA transcription as well as viral replication. In Gallus gallus (Chicken), this protein is Nucleoprotein.